The chain runs to 123 residues: Immunoglobulin lambda variable 5-37 (123 aa).

A signal peptide spans 1-19 (MAWTPLLLLLLSHCTGSLS). The segment at 20–44 (QPVLTQPPSSSASPGESARLTCTLP) is framework-1. Residues 21 to 123 (PVLTQPPSSS…YCMIWPSNAS (103 aa)) form the Ig-like domain. Cys-41 and Cys-115 form a disulfide bridge. Positions 45 to 53 (SDINVGSYN) are complementarity-determining-1. A framework-2 region spans residues 54–70 (IYWYQQKPGSPPRYLLY). The tract at residues 71–77 (YYSDSDK) is complementarity-determining-2. Residues 78-115 (GQGSGVPSRFSGSKDASANTGILLISGLQSEDEADYYC) form a framework-3 region. The segment at 116–123 (MIWPSNAS) is complementarity-determining-3.

Immunoglobulins are composed of two identical heavy chains and two identical light chains; disulfide-linked.

It localises to the secreted. The protein resides in the cell membrane. In terms of biological role, v region of the variable domain of immunoglobulin light chains that participates in the antigen recognition. Immunoglobulins, also known as antibodies, are membrane-bound or secreted glycoproteins produced by B lymphocytes. In the recognition phase of humoral immunity, the membrane-bound immunoglobulins serve as receptors which, upon binding of a specific antigen, trigger the clonal expansion and differentiation of B lymphocytes into immunoglobulins-secreting plasma cells. Secreted immunoglobulins mediate the effector phase of humoral immunity, which results in the elimination of bound antigens. The antigen binding site is formed by the variable domain of one heavy chain, together with that of its associated light chain. Thus, each immunoglobulin has two antigen binding sites with remarkable affinity for a particular antigen. The variable domains are assembled by a process called V-(D)-J rearrangement and can then be subjected to somatic hypermutations which, after exposure to antigen and selection, allow affinity maturation for a particular antigen. This Homo sapiens (Human) protein is Immunoglobulin lambda variable 5-37.